We begin with the raw amino-acid sequence, 377 residues long: Pseudouridylate synthase RPUSD4, mitochondrial (377 aa).

A disordered region spans residues 51–70 (LRAQKQQQKTKEPAPTNPVQ). Aspartate 153 is a catalytic residue.

It belongs to the pseudouridine synthase RluA family. In terms of assembly, interacts with 16S mt-rRNA, mt-tRNA(Phe) and mt-tRNA(Met). Forms a regulatory protein-RNA complex, consisting of RCC1L, NGRN, RPUSD3, RPUSD4, TRUB2, FASTKD2 and 16S mt-rRNA.

The protein localises to the mitochondrion matrix. The protein resides in the nucleus. Its subcellular location is the cytoplasm. The catalysed reaction is uridine in 5S rRNA = pseudouridine in 5S rRNA. The enzyme catalyses a uridine in tRNA = a pseudouridine in tRNA. It catalyses the reaction a uridine in mRNA = a pseudouridine in mRNA. Its function is as follows. Catalyzes uridine to pseudouridine isomerization (pseudouridylation) of different mitochondrial RNA substrates. Acts on position 1397 in 16S mitochondrial ribosomal RNA (16S mt-rRNA). This modification is required for the assembly of 16S mt-rRNA into a functional mitochondrial ribosome. As a component of a functional protein-RNA module, consisting of RCC1L, NGRN, RPUSD3, RPUSD4, TRUB2, FASTKD2 and 16S mt-rRNA, controls 16S mt-rRNA abundance and is required for intra-mitochondrial translation. Acts on position 39 in mitochondrial tRNA(Phe). Also catalyzes pseudouridylation of mRNAs in nucleus: acts as a regulator of pre-mRNA splicing by mediating pseudouridylation of pre-mRNAs at locations associated with alternatively spliced regions. Pseudouridylation of pre-mRNAs near splice sites directly regulates mRNA splicing and mRNA 3'-end processing. The protein is Pseudouridylate synthase RPUSD4, mitochondrial of Bos taurus (Bovine).